A 306-amino-acid chain; its full sequence is MKNEFLNFEQIDRATWQQLHRKTTIPLSQSELNSIKSFNDRIQLHEVSDIYLPLVNLIHIYRKARKDLNFTKSLFLQKTIKPQPFIIGVSGSVAVGKSTTSRLLQILIARTFKYAKVELVTTDGFLQPYAVLEERQLLNKKGFPESYDMEKLIDFLDKIKNGYDCQIPVYSHEIYDIIPNKTQEIKSPDFLIVEGINVFQNPQNQRLYVSDYFDLSIYVDADVEHIETWYLERFQKLLTLAKNDPNNYYHRFTQMTYPEILSIAQNTWKNINLANLEKFIEPTRNRADIILHKAENHEIDKIYLKK.

91–98 (GSVAVGKS) provides a ligand contact to ATP.

This sequence belongs to the prokaryotic pantothenate kinase family.

It localises to the cytoplasm. It carries out the reaction (R)-pantothenate + ATP = (R)-4'-phosphopantothenate + ADP + H(+). Its pathway is cofactor biosynthesis; coenzyme A biosynthesis; CoA from (R)-pantothenate: step 1/5. The protein is Pantothenate kinase of Streptococcus suis (strain 98HAH33).